Here is a 208-residue protein sequence, read N- to C-terminus: Ras-related protein RABH1b (208 aa).

16–23 (GDQSVGKT) is a binding site for GTP. Residues 38-46 (YQATIGIDF) carry the Effector region motif. GTP is bound by residues 64-68 (DTAGQ), 122-125 (NKTD), and 152-153 (SA). 2 S-geranylgeranyl cysteine lipidation sites follow: Cys-206 and Cys-208. Cys-208 is modified (cysteine methyl ester).

This sequence belongs to the small GTPase superfamily. Rab family. In terms of assembly, interacts with the C-terminus of GC5, but not with GC3. Expressed in roots, stems, leaves and flowers.

The protein localises to the golgi apparatus membrane. Its subcellular location is the cytoplasm. The protein resides in the cytosol. Its function is as follows. Protein transport. Regulator of membrane traffic from the Golgi apparatus towards the endoplasmic reticulum (ER). Binds GTP and GDP and possesses intrinsic GTPase activity. This Arabidopsis thaliana (Mouse-ear cress) protein is Ras-related protein RABH1b (RABH1B).